A 168-amino-acid chain; its full sequence is Lipoprotein signal peptidase (168 aa).

The next 4 membrane-spanning stretches (helical) occupy residues Trp15 to Asp35, Val47 to Ser67, Trp75 to Leu95, and Ala107 to Val127. Residues Asp128 and Asp146 contribute to the active site. The helical transmembrane segment at Ala141–Phe161 threads the bilayer.

The protein belongs to the peptidase A8 family.

Its subcellular location is the cell inner membrane. The catalysed reaction is Release of signal peptides from bacterial membrane prolipoproteins. Hydrolyzes -Xaa-Yaa-Zaa-|-(S,diacylglyceryl)Cys-, in which Xaa is hydrophobic (preferably Leu), and Yaa (Ala or Ser) and Zaa (Gly or Ala) have small, neutral side chains.. It functions in the pathway protein modification; lipoprotein biosynthesis (signal peptide cleavage). Its function is as follows. This protein specifically catalyzes the removal of signal peptides from prolipoproteins. The polypeptide is Lipoprotein signal peptidase (Vibrio campbellii (strain ATCC BAA-1116)).